We begin with the raw amino-acid sequence, 190 residues long: Coat protein (190 aa).

Belongs to the potexvirus capsid protein family.

It localises to the virion. Its function is as follows. Required for genome encapsidation. Forms ribonucleoprotein complexes along with TGB1 helicase and viral RNA. This is Coat protein from White clover mosaic virus (strain M) (WCMV).